The following is a 264-amino-acid chain: Glutamate racemase (264 aa).

Substrate-binding positions include 12 to 13 and 44 to 45; these read DS and YG. Cys-76 functions as the Proton donor/acceptor in the catalytic mechanism. 77–78 is a substrate binding site; it reads NT. Cys-186 serves as the catalytic Proton donor/acceptor. Substrate is bound at residue 187–188; the sequence is TH.

This sequence belongs to the aspartate/glutamate racemases family.

The catalysed reaction is L-glutamate = D-glutamate. It functions in the pathway cell wall biogenesis; peptidoglycan biosynthesis. In terms of biological role, provides the (R)-glutamate required for cell wall biosynthesis. The polypeptide is Glutamate racemase (Fusobacterium nucleatum subsp. nucleatum (strain ATCC 25586 / DSM 15643 / BCRC 10681 / CIP 101130 / JCM 8532 / KCTC 2640 / LMG 13131 / VPI 4355)).